A 318-amino-acid chain; its full sequence is Ribosomal RNA small subunit methyltransferase H (318 aa).

S-adenosyl-L-methionine is bound by residues Gly-35 to His-37, Asp-54, Phe-83, Asp-104, and Gln-111.

Belongs to the methyltransferase superfamily. RsmH family.

It is found in the cytoplasm. The catalysed reaction is cytidine(1402) in 16S rRNA + S-adenosyl-L-methionine = N(4)-methylcytidine(1402) in 16S rRNA + S-adenosyl-L-homocysteine + H(+). Functionally, specifically methylates the N4 position of cytidine in position 1402 (C1402) of 16S rRNA. This chain is Ribosomal RNA small subunit methyltransferase H, found in Latilactobacillus sakei subsp. sakei (strain 23K) (Lactobacillus sakei subsp. sakei).